Consider the following 115-residue polypeptide: Macrophage migration inhibitory factor (115 aa).

Pro2 serves as the catalytic Proton acceptor; via imino nitrogen. 2 residues coordinate substrate: Lys33 and Ile65. An N6-acetyllysine; alternate modification is found at Lys78. Residue Lys78 is modified to N6-succinyllysine; alternate. Asn98 is a substrate binding site.

It belongs to the MIF family. As to quaternary structure, homotrimer. Interacts with CD74 and CXCR2 extracellular domain and COPS5. Interacts with the USO1 and BNIPL.

The protein localises to the secreted. Its subcellular location is the cytoplasm. It catalyses the reaction 3-phenylpyruvate = enol-phenylpyruvate. The catalysed reaction is L-dopachrome = 5,6-dihydroxyindole-2-carboxylate. Functionally, pro-inflammatory cytokine involved in the innate immune response to bacterial pathogens. The expression of MIF at sites of inflammation suggests a role as mediator in regulating the function of macrophages in host defense. Counteracts the anti-inflammatory activity of glucocorticoids. Has phenylpyruvate tautomerase and dopachrome tautomerase activity (in vitro), but the physiological substrate is not known. It is not clear whether the tautomerase activity has any physiological relevance, and whether it is important for cytokine activity. In Mus musculus (Mouse), this protein is Macrophage migration inhibitory factor.